Reading from the N-terminus, the 473-residue chain is Inactive FRIGIDA-like protein 2 (473 aa).

Coiled-coil stretches lie at residues 3–35 (AAESIAASINQIDEKKQKLKKAFDDLQAHRSLL) and 306–361 (SLKV…RATK). The tract at residues 356-384 (RKRATKFNSPANPQQPQEQKVDNKRPRVA) is disordered. The segment covering 361 to 373 (KFNSPANPQQPQE) has biased composition (polar residues).

This sequence belongs to the Frigida family. As to expression, expressed at low levels throughout the plant, with slightly higher expression in developing seeds and the highest expression in pollen.

Inactive FRIGIDA-like 2 protein. The protein is Inactive FRIGIDA-like protein 2 (FRL2) of Arabidopsis thaliana (Mouse-ear cress).